A 167-amino-acid chain; its full sequence is G/U mismatch-specific DNA glycosylase (167 aa).

This sequence belongs to the uracil-DNA glycosylase (UDG) superfamily. TDG/mug family. Binds DNA as a monomer.

Its subcellular location is the cytoplasm. The enzyme catalyses Specifically hydrolyzes mismatched double-stranded DNA and polynucleotides, releasing free uracil.. Excises ethenocytosine and uracil, which can arise by alkylation or deamination of cytosine, respectively, from the corresponding mispairs with guanine in ds-DNA. It is capable of hydrolyzing the carbon-nitrogen bond between the sugar-phosphate backbone of the DNA and the mispaired base. The complementary strand guanine functions in substrate recognition. Required for DNA damage lesion repair in stationary-phase cells. This chain is G/U mismatch-specific DNA glycosylase, found in Pectobacterium atrosepticum (strain SCRI 1043 / ATCC BAA-672) (Erwinia carotovora subsp. atroseptica).